The primary structure comprises 337 residues: Glycerol-3-phosphate dehydrogenase [NAD(P)+] 2 (337 aa).

Positions 11, 12, and 105 each coordinate NADPH. Positions 105, 139, and 141 each coordinate sn-glycerol 3-phosphate. Residue Ala143 participates in NADPH binding. Sn-glycerol 3-phosphate-binding residues include Lys194, Asp247, Ser257, Arg258, and Asn259. Lys194 functions as the Proton acceptor in the catalytic mechanism. NADPH is bound at residue Arg258. Val282 and Glu284 together coordinate NADPH.

This sequence belongs to the NAD-dependent glycerol-3-phosphate dehydrogenase family.

The protein resides in the cytoplasm. The enzyme catalyses sn-glycerol 3-phosphate + NAD(+) = dihydroxyacetone phosphate + NADH + H(+). The catalysed reaction is sn-glycerol 3-phosphate + NADP(+) = dihydroxyacetone phosphate + NADPH + H(+). It participates in membrane lipid metabolism; glycerophospholipid metabolism. Functionally, catalyzes the reduction of the glycolytic intermediate dihydroxyacetone phosphate (DHAP) to sn-glycerol 3-phosphate (G3P), the key precursor for phospholipid synthesis. This is Glycerol-3-phosphate dehydrogenase [NAD(P)+] 2 from Lactobacillus delbrueckii subsp. bulgaricus (strain ATCC 11842 / DSM 20081 / BCRC 10696 / JCM 1002 / NBRC 13953 / NCIMB 11778 / NCTC 12712 / WDCM 00102 / Lb 14).